Reading from the N-terminus, the 268-residue chain is Octanoyltransferase (268 aa).

Residues 47-243 (PETPDQVWLV…ALCEVLAAHE (197 aa)) form the BPL/LPL catalytic domain. Residues 87-94 (RGGQITYH), 159-161 (ALG), and 172-174 (GVS) contribute to the substrate site. The active-site Acyl-thioester intermediate is the cysteine 190.

The protein belongs to the LipB family.

The protein resides in the cytoplasm. The catalysed reaction is octanoyl-[ACP] + L-lysyl-[protein] = N(6)-octanoyl-L-lysyl-[protein] + holo-[ACP] + H(+). Its pathway is protein modification; protein lipoylation via endogenous pathway; protein N(6)-(lipoyl)lysine from octanoyl-[acyl-carrier-protein]: step 1/2. In terms of biological role, catalyzes the transfer of endogenously produced octanoic acid from octanoyl-acyl-carrier-protein onto the lipoyl domains of lipoate-dependent enzymes. Lipoyl-ACP can also act as a substrate although octanoyl-ACP is likely to be the physiological substrate. The protein is Octanoyltransferase of Cupriavidus necator (strain ATCC 17699 / DSM 428 / KCTC 22496 / NCIMB 10442 / H16 / Stanier 337) (Ralstonia eutropha).